The primary structure comprises 86 residues: MAKEELIEMQGKVDEVLPDARYRVTLDNGHQLIAYTGGKMRKFRIRILAGDLVTLEMSPYDLNKGRVTFRHIENRTRTTPPARRRH.

The region spanning 1–72 (MAKEELIEMQ…NKGRVTFRHI (72 aa)) is the S1-like domain.

It belongs to the IF-1 family. In terms of assembly, component of the 30S ribosomal translation pre-initiation complex which assembles on the 30S ribosome in the order IF-2 and IF-3, IF-1 and N-formylmethionyl-tRNA(fMet); mRNA recruitment can occur at any time during PIC assembly.

It is found in the cytoplasm. Its function is as follows. One of the essential components for the initiation of protein synthesis. Stabilizes the binding of IF-2 and IF-3 on the 30S subunit to which N-formylmethionyl-tRNA(fMet) subsequently binds. Helps modulate mRNA selection, yielding the 30S pre-initiation complex (PIC). Upon addition of the 50S ribosomal subunit IF-1, IF-2 and IF-3 are released leaving the mature 70S translation initiation complex. In Acidovorax sp. (strain JS42), this protein is Translation initiation factor IF-1 3.